The following is a 366-amino-acid chain: Growth hormone secretagogue receptor type 1 (366 aa).

The Extracellular portion of the chain corresponds to methionine 1–alanine 40. Asparagine 13 and asparagine 27 each carry an N-linked (GlcNAc...) asparagine glycan. The helical transmembrane segment at proline 41–leucine 66 threads the bilayer. Residues valine 67–arginine 72 lie on the Cytoplasmic side of the membrane. A helical transmembrane segment spans residues glutamate 73–methionine 96. Over proline 97–lysine 117 the chain is Extracellular. Cysteines 116 and 198 form a disulfide. The helical transmembrane segment at leucine 118–valine 139 threads the bilayer. The Cytoplasmic segment spans residues glutamate 140–leucine 162. The chain crosses the membrane as a helical span at residues valine 163–glycine 183. At valine 184–threonine 211 the chain is on the extracellular side. An N-linked (GlcNAc...) asparagine glycan is attached at asparagine 188. The helical transmembrane segment at isoleucine 212 to isoleucine 235 threads the bilayer. Residues glycine 236 to lysine 263 are Cytoplasmic-facing. A helical membrane pass occupies residues methionine 264–leucine 285. Over phenylalanine 286–glutamine 302 the chain is Extracellular. A helical transmembrane segment spans residues tyrosine 303–methionine 326. Residues serine 327 to threonine 366 lie on the Cytoplasmic side of the membrane.

This sequence belongs to the G-protein coupled receptor 1 family.

It localises to the cell membrane. In terms of biological role, receptor for ghrelin, coupled to G-alpha-11 proteins. Stimulates growth hormone secretion. Also binds other growth hormone releasing peptides (GHRP) (e.g. Met-enkephalin and GHRP-6) as well as non-peptide, low molecular weight secretagogues (e.g. L-692,429, MK-0677, adenosine). The chain is Growth hormone secretagogue receptor type 1 (GHSR) from Oryctolagus cuniculus (Rabbit).